A 413-amino-acid polypeptide reads, in one-letter code: MEVQEFCENMEEIEDENYDEEKSARTSDENRKQNHSEIEKRRRDKMNTYINELSSMIPMCFAMQRKLDKLTVLRMAVQHLRGIRGSGSLHPFNGSDYRPSFLSDQELKMIILQASEGFLFVVGCDRGRILYVSDSVSSVLNSTQADLLGQSWFDVLHPKDIGKVKEQLSSLEQCPRERLIDAKTMLPVKTDVPQSLCRLCPGARRSFFCRMKLRTASNNQIKEESDTSSSSRSSTKRKSRLTTGHKYRVIQCTGYLKSWTPIKDEDQDADSDEQTTNLSCLVAIGRIPPNVRNSTVPASLDNHPNIRHVLFISRHSGEGKFLFIDQRATLVIGFLPQEILGTSFYEYFHNEDIAALMESHKMVMQVPEKVTTQVYRFRCKDNSYIQLQSEWRAFKNPWTSEIDYIIAKNSVFL.

The segment at Met-1–Arg-43 is disordered. Over residues Glu-8–Asp-19 the composition is skewed to acidic residues. Basic and acidic residues predominate over residues Glu-20–Arg-41. One can recognise a bHLH domain in the interval Asn-30–Ile-83. One can recognise a PAS 1 domain in the interval Asp-104 to Pro-175. Positions Asn-219–Thr-242 are disordered. In terms of domain architecture, PAS 2 spans Pro-297–Pro-367. A PAC domain is found at Thr-372–Leu-413.

In terms of assembly, efficient DNA binding requires dimerization with another bHLH protein. Forms a heterodimer with Clock in order to activate PER and TIM transcription. As to expression, expressed in head and ovary.

It localises to the nucleus. Its function is as follows. Putative transcription factor involved in the generation of biological rhythms. Activates cycling transcription of Period (PER) and Timeless (TIM) by binding to the E-box (5'-CACGTG-3') present in their promoters. The protein is Protein cycle (cyc) of Drosophila melanogaster (Fruit fly).